The primary structure comprises 153 residues: Ribosome maturation factor RimP (153 aa).

Belongs to the RimP family.

The protein resides in the cytoplasm. Required for maturation of 30S ribosomal subunits. The protein is Ribosome maturation factor RimP of Acidithiobacillus ferrooxidans (strain ATCC 53993 / BNL-5-31) (Leptospirillum ferrooxidans (ATCC 53993)).